The chain runs to 426 residues: D-tagatose-1,6-bisphosphate aldolase subunit KbaZ (426 aa).

It belongs to the GatZ/KbaZ family. KbaZ subfamily. As to quaternary structure, forms a complex with KbaY.

The protein operates within carbohydrate metabolism; D-tagatose 6-phosphate degradation; D-glyceraldehyde 3-phosphate and glycerone phosphate from D-tagatose 6-phosphate: step 2/2. Component of the tagatose-1,6-bisphosphate aldolase KbaYZ that is required for full activity and stability of the Y subunit. Could have a chaperone-like function for the proper and stable folding of KbaY. When expressed alone, KbaZ does not show any aldolase activity. The polypeptide is D-tagatose-1,6-bisphosphate aldolase subunit KbaZ (Escherichia coli O6:H1 (strain CFT073 / ATCC 700928 / UPEC)).